An 86-amino-acid chain; its full sequence is Secreted transmembrane peptide 6 (86 aa).

Positions 1–31 (MGMKSPNIAAFMLPLLLILFTLSSQLKVVES) are cleaved as a signal peptide. An SCOOP motif motif is present at residues 45–58 (IVYTPPSRSCGTSP). A SxS motif essential for MIK2 binding motif is present at residues 51 to 53 (SRS).

This sequence belongs to the serine rich endogenous peptide (SCOOP) phytocytokine family. As to quaternary structure, interacts with MIK2 (via extracellular leucine-rich repeat domain); this interaction triggers the formation of complex between MIK2 and the BAK1/SERK3 and SERK4 coreceptors, and subsequent BAK1 activation by phosphorylation. In terms of tissue distribution, mostly expressed in leaves, and, to a lower extent, in roots, stems, siliques, seeds and flowers.

Its subcellular location is the cell membrane. It is found in the secreted. The protein localises to the extracellular space. It localises to the apoplast. Its function is as follows. Brassicaceae-specific phytocytokine (plant endogenous peptide released into the apoplast) perceived by MIK2 in a BAK1/SERK3 and SERK4 coreceptors-dependent manner, that modulates various physiological and antimicrobial processes including growth prevention and reactive oxygen species (ROS) response regulation. Prevents general growth and development. The chain is Secreted transmembrane peptide 6 from Arabidopsis thaliana (Mouse-ear cress).